Consider the following 496-residue polypeptide: Probable cytosol aminopeptidase (496 aa).

Mn(2+) contacts are provided by K251 and D256. K263 is an active-site residue. The Mn(2+) site is built by D274, D333, and E335. Residue R337 is part of the active site.

The protein belongs to the peptidase M17 family. It depends on Mn(2+) as a cofactor.

The protein resides in the cytoplasm. It catalyses the reaction Release of an N-terminal amino acid, Xaa-|-Yaa-, in which Xaa is preferably Leu, but may be other amino acids including Pro although not Arg or Lys, and Yaa may be Pro. Amino acid amides and methyl esters are also readily hydrolyzed, but rates on arylamides are exceedingly low.. The enzyme catalyses Release of an N-terminal amino acid, preferentially leucine, but not glutamic or aspartic acids.. In terms of biological role, presumably involved in the processing and regular turnover of intracellular proteins. Catalyzes the removal of unsubstituted N-terminal amino acids from various peptides. This chain is Probable cytosol aminopeptidase, found in Acidovorax sp. (strain JS42).